The sequence spans 237 residues: Small ribosomal subunit protein eS4 (237 aa).

Positions 37–99 (VPLLIVLRDV…REEYYRIFPD (63 aa)) constitute an S4 RNA-binding domain.

It belongs to the eukaryotic ribosomal protein eS4 family.

The sequence is that of Small ribosomal subunit protein eS4 from Natronomonas pharaonis (strain ATCC 35678 / DSM 2160 / CIP 103997 / JCM 8858 / NBRC 14720 / NCIMB 2260 / Gabara) (Halobacterium pharaonis).